The primary structure comprises 270 residues: Elongation factor Ts (270 aa).

Residues 81-84 are involved in Mg(2+) ion dislocation from EF-Tu; that stretch reads TDFV.

It belongs to the EF-Ts family.

The protein localises to the cytoplasm. In terms of biological role, associates with the EF-Tu.GDP complex and induces the exchange of GDP to GTP. It remains bound to the aminoacyl-tRNA.EF-Tu.GTP complex up to the GTP hydrolysis stage on the ribosome. This is Elongation factor Ts from Wigglesworthia glossinidia brevipalpis.